Here is a 156-residue protein sequence, read N- to C-terminus: uncharacterized protein (156 aa).

3 consecutive transmembrane segments (helical) span residues 42–59, 79–98, and 105–127; these read LLMM…MTTV, ASFL…LLLY, and SLGR…VLGI.

It is found in the cell membrane. This is an uncharacterized protein from Archaeoglobus fulgidus (strain ATCC 49558 / DSM 4304 / JCM 9628 / NBRC 100126 / VC-16).